The following is a 959-amino-acid chain: Translation initiation factor IF-2 (959 aa).

Residues 1–10 (MSDKTNDDKT) show a composition bias toward basic and acidic residues. Residues 1–374 (MSDKTNDDKT…SQMQETREKI (374 aa)) form a disordered region. The span at 27–37 (EQSTVRQNFSH) shows a compositional bias: polar residues. Low complexity-rich tracts occupy residues 63-118 (AAAA…VTKP) and 128-138 (QRPGGQQAQRP). Basic and acidic residues-rich tracts occupy residues 154–225 (SEMD…EAAK) and 232–241 (ARSERRDDAR). The span at 246–284 (GARPQQAGRPQGGRPQPAGRPQQGSPRPAPIIADAAPIA) shows a compositional bias: low complexity. Basic and acidic residues predominate over residues 318–333 (PEVRAPKVVKGEDDRR). In terms of domain architecture, tr-type G spans 457–626 (SRPPVVTIMG…LLQAEMLDLK (170 aa)). The interval 466-473 (GHVDHGKT) is G1. 466-473 (GHVDHGKT) lines the GTP pocket. The G2 stretch occupies residues 491–495 (GITQH). The tract at residues 512–515 (DTPG) is G3. Residues 512–516 (DTPGH) and 566–569 (NKID) each bind GTP. The interval 566-569 (NKID) is G4. A G5 region spans residues 602–604 (SAK).

The protein belongs to the TRAFAC class translation factor GTPase superfamily. Classic translation factor GTPase family. IF-2 subfamily.

It localises to the cytoplasm. Functionally, one of the essential components for the initiation of protein synthesis. Protects formylmethionyl-tRNA from spontaneous hydrolysis and promotes its binding to the 30S ribosomal subunits. Also involved in the hydrolysis of GTP during the formation of the 70S ribosomal complex. In Brucella suis biovar 1 (strain 1330), this protein is Translation initiation factor IF-2.